A 100-amino-acid polypeptide reads, in one-letter code: Small ribosomal subunit protein eS24 (100 aa).

Belongs to the eukaryotic ribosomal protein eS24 family.

The chain is Small ribosomal subunit protein eS24 from Methanothermobacter thermautotrophicus (strain ATCC 29096 / DSM 1053 / JCM 10044 / NBRC 100330 / Delta H) (Methanobacterium thermoautotrophicum).